The chain runs to 549 residues: Glucose-6-phosphate isomerase (549 aa).

Residue Glu-355 is the Proton donor of the active site. Catalysis depends on residues His-386 and Lys-514.

Belongs to the GPI family.

It localises to the cytoplasm. The enzyme catalyses alpha-D-glucose 6-phosphate = beta-D-fructose 6-phosphate. Its pathway is carbohydrate biosynthesis; gluconeogenesis. It participates in carbohydrate degradation; glycolysis; D-glyceraldehyde 3-phosphate and glycerone phosphate from D-glucose: step 2/4. In terms of biological role, catalyzes the reversible isomerization of glucose-6-phosphate to fructose-6-phosphate. In Salmonella enteritidis PT4 (strain P125109), this protein is Glucose-6-phosphate isomerase.